A 160-amino-acid chain; its full sequence is Cytochrome b6-f complex subunit 4 (160 aa).

The next 3 membrane-spanning stretches (helical) occupy residues 36 to 56 (LLYI…GLSV), 95 to 115 (LLGV…PFIE), and 131 to 151 (TVFL…ALPI).

This sequence belongs to the cytochrome b family. PetD subfamily. As to quaternary structure, the 4 large subunits of the cytochrome b6-f complex are cytochrome b6, subunit IV (17 kDa polypeptide, petD), cytochrome f and the Rieske protein, while the 4 small subunits are petG, petL, petM and petN. The complex functions as a dimer.

The protein localises to the plastid. The protein resides in the chloroplast thylakoid membrane. In terms of biological role, component of the cytochrome b6-f complex, which mediates electron transfer between photosystem II (PSII) and photosystem I (PSI), cyclic electron flow around PSI, and state transitions. This Chaetosphaeridium globosum (Charophycean green alga) protein is Cytochrome b6-f complex subunit 4.